The following is a 132-amino-acid chain: Ribosome-binding factor A (132 aa).

Belongs to the RbfA family. As to quaternary structure, monomer. Binds 30S ribosomal subunits, but not 50S ribosomal subunits or 70S ribosomes.

It localises to the cytoplasm. Its function is as follows. One of several proteins that assist in the late maturation steps of the functional core of the 30S ribosomal subunit. Associates with free 30S ribosomal subunits (but not with 30S subunits that are part of 70S ribosomes or polysomes). Required for efficient processing of 16S rRNA. May interact with the 5'-terminal helix region of 16S rRNA. The chain is Ribosome-binding factor A from Caldicellulosiruptor bescii (strain ATCC BAA-1888 / DSM 6725 / KCTC 15123 / Z-1320) (Anaerocellum thermophilum).